Here is a 252-residue protein sequence, read N- to C-terminus: 4-hydroxy-tetrahydrodipicolinate reductase (252 aa).

NAD(+) contacts are provided by residues 8 to 13 (GCCGKM), 84 to 86 (CST), and 108 to 111 (SANM). His-141 acts as the Proton donor/acceptor in catalysis. His-142 is a binding site for (S)-2,3,4,5-tetrahydrodipicolinate. Catalysis depends on Lys-145, which acts as the Proton donor. 151 to 152 (GT) contacts (S)-2,3,4,5-tetrahydrodipicolinate.

This sequence belongs to the DapB family.

It is found in the cytoplasm. The enzyme catalyses (S)-2,3,4,5-tetrahydrodipicolinate + NAD(+) + H2O = (2S,4S)-4-hydroxy-2,3,4,5-tetrahydrodipicolinate + NADH + H(+). It catalyses the reaction (S)-2,3,4,5-tetrahydrodipicolinate + NADP(+) + H2O = (2S,4S)-4-hydroxy-2,3,4,5-tetrahydrodipicolinate + NADPH + H(+). It functions in the pathway amino-acid biosynthesis; L-lysine biosynthesis via DAP pathway; (S)-tetrahydrodipicolinate from L-aspartate: step 4/4. Functionally, catalyzes the conversion of 4-hydroxy-tetrahydrodipicolinate (HTPA) to tetrahydrodipicolinate. The polypeptide is 4-hydroxy-tetrahydrodipicolinate reductase (Clostridium botulinum (strain Eklund 17B / Type B)).